The primary structure comprises 210 residues: LexA repressor (210 aa).

Residues 28-48 (FEEIAEGMGLSSLATVHKHIG) constitute a DNA-binding region (H-T-H motif). Catalysis depends on for autocatalytic cleavage activity residues Ser131 and Lys169.

It belongs to the peptidase S24 family. Homodimer.

The enzyme catalyses Hydrolysis of Ala-|-Gly bond in repressor LexA.. Represses a number of genes involved in the response to DNA damage (SOS response), including recA and lexA. In the presence of single-stranded DNA, RecA interacts with LexA causing an autocatalytic cleavage which disrupts the DNA-binding part of LexA, leading to derepression of the SOS regulon and eventually DNA repair. The chain is LexA repressor from Koribacter versatilis (strain Ellin345).